The sequence spans 692 residues: Eomesodermin (692 aa).

The tract at residues 35–135 (NSSTPNLPHT…LNTAVPTSAP (101 aa)) is disordered. A DNA-binding region (T-box) is located at residues 263 to 443 (LWLKFHRHQT…HNPFAKGFRD (181 aa)). Positions 578 to 692 (SMAGWGSRGS…LGYYSFYSSS (115 aa)) are required for transcription activation. Disordered stretches follow at residues 595 to 614 (TSLP…DLLP) and 621 to 673 (EMSS…DIGT). Composition is skewed to low complexity over residues 596–609 (SLPW…SGFS) and 654–665 (SPSTSSNENSPP).

It is found in the nucleus. Functionally, functions as a transcriptional activator playing a crucial role during development. Functions in gastrulation, regulating mesoderm differentiation. Activates wnt8, t/bra, chrd and mix-A/mix.1 expression. The protein is Eomesodermin (eomes) of Xenopus laevis (African clawed frog).